The following is a 336-amino-acid chain: DNA-directed RNA polymerase subunit alpha (336 aa).

The tract at residues 1–233 is alpha N-terminal domain (alpha-NTD); it reads MSSNSFLTPR…EQFSFFADLE (233 aa). Positions 247 to 336 are alpha C-terminal domain (alpha-CTD); sequence IDPILLRPVD…YIKEPGHASS (90 aa).

This sequence belongs to the RNA polymerase alpha chain family. As to quaternary structure, homodimer. The RNAP catalytic core consists of 2 alpha, 1 beta, 1 beta' and 1 omega subunit. When a sigma factor is associated with the core the holoenzyme is formed, which can initiate transcription.

The enzyme catalyses RNA(n) + a ribonucleoside 5'-triphosphate = RNA(n+1) + diphosphate. Functionally, DNA-dependent RNA polymerase catalyzes the transcription of DNA into RNA using the four ribonucleoside triphosphates as substrates. The protein is DNA-directed RNA polymerase subunit alpha of Nitrosomonas europaea (strain ATCC 19718 / CIP 103999 / KCTC 2705 / NBRC 14298).